Consider the following 231-residue polypeptide: NADH-ubiquinone oxidoreductase chain 4 (231 aa).

Helical transmembrane passes span 1-21 (PIAG…YGII), 34-54 (MFLP…LTCL), 63-85 (IAYS…TPWG), 89-111 (AMAL…NTTY), 118-138 (ILIL…WWLL), and 169-189 (TIIL…HMFL).

Belongs to the complex I subunit 4 family.

It localises to the mitochondrion membrane. The enzyme catalyses a ubiquinone + NADH + 5 H(+)(in) = a ubiquinol + NAD(+) + 4 H(+)(out). Core subunit of the mitochondrial membrane respiratory chain NADH dehydrogenase (Complex I) that is believed to belong to the minimal assembly required for catalysis. Complex I functions in the transfer of electrons from NADH to the respiratory chain. The immediate electron acceptor for the enzyme is believed to be ubiquinone. The protein is NADH-ubiquinone oxidoreductase chain 4 (MT-ND4) of Trimeresurus cantori (Cantor's pit viper).